The sequence spans 983 residues: Glycine dehydrogenase (decarboxylating) (983 aa).

An N6-(pyridoxal phosphate)lysine modification is found at Lys-731.

The protein belongs to the GcvP family. The glycine cleavage system is composed of four proteins: P, T, L and H. It depends on pyridoxal 5'-phosphate as a cofactor.

The enzyme catalyses N(6)-[(R)-lipoyl]-L-lysyl-[glycine-cleavage complex H protein] + glycine + H(+) = N(6)-[(R)-S(8)-aminomethyldihydrolipoyl]-L-lysyl-[glycine-cleavage complex H protein] + CO2. The glycine cleavage system catalyzes the degradation of glycine. The P protein binds the alpha-amino group of glycine through its pyridoxal phosphate cofactor; CO(2) is released and the remaining methylamine moiety is then transferred to the lipoamide cofactor of the H protein. This is Glycine dehydrogenase (decarboxylating) from Nostoc sp. (strain PCC 7120 / SAG 25.82 / UTEX 2576).